A 432-amino-acid chain; its full sequence is NADH-quinone oxidoreductase subunit D (432 aa).

It belongs to the complex I 49 kDa subunit family. As to quaternary structure, NDH-1 is composed of 14 different subunits. Subunits NuoB, C, D, E, F, and G constitute the peripheral sector of the complex.

The protein localises to the cell membrane. It carries out the reaction a quinone + NADH + 5 H(+)(in) = a quinol + NAD(+) + 4 H(+)(out). Its function is as follows. NDH-1 shuttles electrons from NADH, via FMN and iron-sulfur (Fe-S) centers, to quinones in the respiratory chain. The immediate electron acceptor for the enzyme in this species is believed to be a menaquinone. Couples the redox reaction to proton translocation (for every two electrons transferred, four hydrogen ions are translocated across the cytoplasmic membrane), and thus conserves the redox energy in a proton gradient. The sequence is that of NADH-quinone oxidoreductase subunit D from Mycobacteroides abscessus (strain ATCC 19977 / DSM 44196 / CCUG 20993 / CIP 104536 / JCM 13569 / NCTC 13031 / TMC 1543 / L948) (Mycobacterium abscessus).